A 1607-amino-acid polypeptide reads, in one-letter code: Laminin subunit gamma-1 (1607 aa).

The N-terminal stretch at 1–33 is a signal peptide; that stretch reads MTGGGRAALALQPRGRLWPLLAVLAAVAGCVRA. In terms of domain architecture, Laminin N-terminal spans 44-283; that stretch reads RPQRCMPEFV…AISDFAVGGR (240 aa). 2 N-linked (GlcNAc...) asparagine glycosylation sites follow: asparagine 58 and asparagine 132. 15 disulfide bridges follow: cysteine 284/cysteine 293, cysteine 286/cysteine 303, cysteine 305/cysteine 314, cysteine 340/cysteine 349, cysteine 342/cysteine 365, cysteine 368/cysteine 377, cysteine 380/cysteine 393, cysteine 396/cysteine 408, cysteine 398/cysteine 414, cysteine 416/cysteine 425, cysteine 428/cysteine 440, cysteine 443/cysteine 454, cysteine 445/cysteine 461, cysteine 463/cysteine 472, and cysteine 475/cysteine 490. 4 consecutive Laminin EGF-like domains span residues 284–339, 340–395, 396–442, and 443–492; these read CKCN…ESLP, CDCN…ACSP, CHCS…GCRP, and CSCD…GCTP. In terms of domain architecture, Laminin EGF-like 5; first part spans 493 to 502; it reads CFCFGHSSVC. Positions 512–687 constitute a Laminin IV type A domain; it reads DISSTFQIDE…PGVPATWVES (176 aa). N-linked (GlcNAc...) asparagine glycans are attached at residues asparagine 574 and asparagine 648. The region spanning 688-721 is the Laminin EGF-like 5; second part domain; the sequence is CTCPVGYGGQFCETCLPGYRRETPSLGPYSPCVL. 24 cysteine pairs are disulfide-bonded: cysteine 722–cysteine 731, cysteine 724–cysteine 738, cysteine 740–cysteine 749, cysteine 752–cysteine 768, cysteine 771–cysteine 779, cysteine 773–cysteine 790, cysteine 793–cysteine 802, cysteine 805–cysteine 823, cysteine 826–cysteine 840, cysteine 828–cysteine 847, cysteine 850–cysteine 859, cysteine 862–cysteine 879, cysteine 882–cysteine 896, cysteine 884–cysteine 903, cysteine 905–cysteine 914, cysteine 917–cysteine 930, cysteine 933–cysteine 945, cysteine 935–cysteine 952, cysteine 954–cysteine 963, cysteine 966–cysteine 978, cysteine 981–cysteine 993, cysteine 983–cysteine 999, cysteine 1001–cysteine 1010, and cysteine 1013–cysteine 1026. Laminin EGF-like domains lie at 722–770 and 771–825; these read CTCN…DCQP and CPCP…LCRP. Residues 826 to 881 form the Laminin EGF-like 8; nidogen-binding domain; that stretch reads CQCNDNIDPNAVGNCNRLTGECLKCIYNTAGFYCDRCKEGFFGNPLAPNPADKCKA. Laminin EGF-like domains lie at 882–932, 933–980, and 981–1028; these read CACN…GCER, CDCH…GCKP, and CDCH…GCQE. N-linked (GlcNAc...) asparagine glycosylation is found at asparagine 1020 and asparagine 1105. The tract at residues 1029–1607 is domain II and I; that stretch reads CPACYRLVKD…CFNTPSIEKP (579 aa). Residues 1034–1594 are a coiled coil; the sequence is RLVKDKAAEH…HNLEDIKKTL (561 aa). Residue serine 1147 is modified to Phosphoserine. 8 N-linked (GlcNAc...) asparagine glycosylation sites follow: asparagine 1159, asparagine 1173, asparagine 1203, asparagine 1221, asparagine 1239, asparagine 1378, asparagine 1393, and asparagine 1437. Serine 1491 is subject to Phosphoserine.

Laminin is a complex glycoprotein, consisting of three different polypeptide chains (alpha, beta, gamma), which are bound to each other by disulfide bonds into a cross-shaped molecule comprising one long and three short arms with globules at each end. Gamma-1 is a subunit of laminin-1 (laminin-111 or EHS laminin), laminin-2 (laminin-211 or merosin), laminin-3 (laminin-121 or S-laminin), laminin-4 (laminin-221 or S-merosin), laminin-6 (laminin-311 or K-laminin), laminin-7 (laminin-321 or KS-laminin), laminin-8 (laminin-411), laminin-9 (laminin-421), laminin-10 (laminin-511) and laminin-11 (laminin-521). Interacts with SVEP1. In terms of tissue distribution, found in the basement membranes (major component).

It is found in the secreted. The protein localises to the extracellular space. The protein resides in the extracellular matrix. It localises to the basement membrane. Binding to cells via a high affinity receptor, laminin is thought to mediate the attachment, migration and organization of cells into tissues during embryonic development by interacting with other extracellular matrix components. In Mus musculus (Mouse), this protein is Laminin subunit gamma-1 (Lamc1).